Consider the following 193-residue polypeptide: Thymidine kinase (193 aa).

Residues 9–16 (STMNAGKS) and 87–90 (DEAQ) each bind ATP. Glu88 functions as the Proton acceptor in the catalytic mechanism. 4 residues coordinate Zn(2+): Cys145, Cys147, Cys182, and His185.

This sequence belongs to the thymidine kinase family. Homotetramer.

It localises to the cytoplasm. The enzyme catalyses thymidine + ATP = dTMP + ADP + H(+). In Haemophilus influenzae (strain ATCC 51907 / DSM 11121 / KW20 / Rd), this protein is Thymidine kinase.